Reading from the N-terminus, the 473-residue chain is MSIKPVVALIGRPNVGKSTLFNQFTKSRQALVADLSGLTRDRQYGDATYEDKAFIVVDTGGIGEADDGRGDIDDYMSEQSYTAIHEADIIVFVVDARAGMIGADAEIGKFLHTLGKPVYVVANKVDGVHDSAPAEFYALGLGEPYPMAASHGRGVGNLLEVLTADMPNQENIIEPRGLKLAIIGRPNVGKSTLVNRLLGEDRVVVFDMPGTTRDSIYIPYKRDGKDYVLIDTAGVRRRGKIDEKVEKFSVIKTLQAIEDSNVTVIVIDAHEGIVDQDLHMIGYALDAGRALVVAINKWDGLTADQKNYIKIEMDRRFNFIPYVKVHQISALHGTGVGNLYPSILRAYQSSMFEVSTNRLTQILQDAVTANPPPTVAGRRIKLRYAHIGGHNPPVIVIHGNQTGSLPKSYQRYLENQFRQVFKLEGTPLNVVFKLNENPYANKSDTPTKAKTQQLRQRERNRAQKFTTKDKKPR.

2 consecutive EngA-type G domains span residues 5 to 170 and 178 to 351; these read PVVA…PNQE and LKLA…QSSM. GTP-binding positions include 11–18, 58–62, 123–126, 184–191, 231–235, and 296–299; these read GRPNVGKS, DTGGI, NKVD, DTAGV, and NKWD. Positions 352–436 constitute a KH-like domain; sequence FEVSTNRLTQ…PLNVVFKLNE (85 aa). Polar residues predominate over residues 438 to 454; that stretch reads PYANKSDTPTKAKTQQL. Positions 438–473 are disordered; the sequence is PYANKSDTPTKAKTQQLRQRERNRAQKFTTKDKKPR. The segment covering 455–473 has biased composition (basic and acidic residues); it reads RQRERNRAQKFTTKDKKPR.

Belongs to the TRAFAC class TrmE-Era-EngA-EngB-Septin-like GTPase superfamily. EngA (Der) GTPase family. As to quaternary structure, associates with the 50S ribosomal subunit.

Its function is as follows. GTPase that plays an essential role in the late steps of ribosome biogenesis. The polypeptide is GTPase Der (Psychrobacter arcticus (strain DSM 17307 / VKM B-2377 / 273-4)).